A 381-amino-acid chain; its full sequence is 3-dehydroquinate synthase (381 aa).

Residues 81–86, 115–119, 139–140, Lys152, and Lys161 each bind NAD(+); these read EGESSK, GVIGD, and TS. 3 residues coordinate Zn(2+): Glu194, His256, and His274.

It belongs to the sugar phosphate cyclases superfamily. Dehydroquinate synthase family. It depends on Co(2+) as a cofactor. Requires Zn(2+) as cofactor. NAD(+) is required as a cofactor.

The protein resides in the cytoplasm. It carries out the reaction 7-phospho-2-dehydro-3-deoxy-D-arabino-heptonate = 3-dehydroquinate + phosphate. The protein operates within metabolic intermediate biosynthesis; chorismate biosynthesis; chorismate from D-erythrose 4-phosphate and phosphoenolpyruvate: step 2/7. Catalyzes the conversion of 3-deoxy-D-arabino-heptulosonate 7-phosphate (DAHP) to dehydroquinate (DHQ). The chain is 3-dehydroquinate synthase from Rhodopseudomonas palustris (strain ATCC BAA-98 / CGA009).